The chain runs to 411 residues: Thyroxine-binding globulin (411 aa).

Positions 1 to 15 are cleaved as a signal peptide; that stretch reads MPLFSLVLLILGLHC. Asn-34, Asn-97, Asn-163, and Asn-251 each carry an N-linked (GlcNAc...) asparagine glycan. Residues Asn-291 and Lys-394 each coordinate thyroxine.

Belongs to the serpin family. Expressed by the liver and secreted in plasma.

The protein resides in the secreted. Major thyroid hormone transport protein in serum. The protein is Thyroxine-binding globulin (SERPINA7) of Bos taurus (Bovine).